A 522-amino-acid chain; its full sequence is MGSVESSNQMNGSIENKTNKIDISVLRPLPTRSNSSISLSSSSHSSFSRMGSLGSLPTNSGSSSPYYNNSSFDLVDEERIKSSIYNLKNHIKCIHKIKEEFRLLEESVGPSETSEGDKKHNTSKNRYTNILPVNHTRVQLKKIQDKEGSDYINANYIDGAYPKQFICTQGPLPNTIADFWRMVWENRCRIIVMLSRESENCRIKCDRYWPEQIGGEQFSIYGNGNEVFGTYSVELVEVIQDPEREIITRNIRLTFEGETRDITQYQYEGWPDHNIPDHTQPFRQLLHSITNRQNQIIPSSDRNVPIIVHCSAGVGRTGTFCTAVIMMKKLDHYFKQLDATPIDQVVDPFTHLPITEYQSDNLDLKGLGYHFKSSIYNSNGINNNNNNNLNNNNNINNNSNGSNNTPQTEPNNEEDDDDAAESDLKYAIMDKYNSRIDFNLFSIVLKLREQRPGMVQQLEQYLFCYKTILDEIYHRLNCKLGFSLPHVNNINNYNNYSNTTTTTTSSLASTTIIHPSTNSKLN.

A disordered region spans residues 32–63; that stretch reads RSNSSISLSSSSHSSFSRMGSLGSLPTNSGSS. Low complexity predominate over residues 33-63; that stretch reads SNSSISLSSSSHSSFSRMGSLGSLPTNSGSS. In terms of domain architecture, Tyrosine-protein phosphatase spans 97–471; that stretch reads IKEEFRLLEE…LFCYKTILDE (375 aa). Cys-310 acts as the Phosphocysteine intermediate in catalysis. The PTPase insert (Asn-rich) stretch occupies residues 327 to 426; that stretch reads MKKLDHYFKQ…DDAAESDLKY (100 aa). Low complexity predominate over residues 382-410; that stretch reads NNNNNNNLNNNNNINNNSNGSNNTPQTEP. The disordered stretch occupies residues 382-420; that stretch reads NNNNNNNLNNNNNINNNSNGSNNTPQTEPNNEEDDDDAA. Over residues 411-420 the composition is skewed to acidic residues; the sequence is NNEEDDDDAA.

It belongs to the protein-tyrosine phosphatase family. Non-receptor class subfamily. Expressed predominantly in anterior-like cells and to a lesser degree in prestalk cells.

The protein localises to the cytoplasm. It localises to the cell membrane. The enzyme catalyses O-phospho-L-tyrosyl-[protein] + H2O = L-tyrosyl-[protein] + phosphate. In terms of biological role, may have a role in growth and in the early stages of development. Affects the timing of development. The chain is Tyrosine-protein phosphatase 1 (ptpA1-1) from Dictyostelium discoideum (Social amoeba).